A 416-amino-acid polypeptide reads, in one-letter code: MKLLGWMHRKLRSNNDVFKEFNTGGGGACNCITGLASPDHDNDYFSGDDAAHASPPVTAGDLFTFGGSGLLTIGTLGIAAVAIPSGGDDDDYDIDFEVDATSDDDGGFTVEDDDADVGGAVTPTFTFPAATAAEAVVATVEKAVAAVEAIAEKDDDTTTEDDLMVVSAELEKVLGGVDVASARVSFAMGGGVDCPLQGFLFGSPVSDVESRPEYLQAPRDSSGSCGGGGRRTSLGELFMRTRFADEKVALVAVAEGEDGVAGDDGAAAAGVGGDRAGKGGGYKTMKKRKVKDEKGGGGAAGGGMPATVTKSKFQKILQIFHRKVYPENTLLTRNLTKKSRNRGATDNGGGAVATGDPDGPLASPVLRCRKDHPMRGFGCCTNGAFGASSPGGNAEMNGNKSGHWIKTDADYLVLEL.

Residues 63-83 form a helical membrane-spanning segment; the sequence is FTFGGSGLLTIGTLGIAAVAI. An IGT motif motif is present at residues 69–75; the sequence is GLLTIGT. Disordered regions lie at residues 266–306 and 337–361; these read AAAA…GMPA and KKSRNRGATDNGGGAVATGDPDGPL. Residues 270–282 show a composition bias toward gly residues; that stretch reads GVGGDRAGKGGGY. A Nuclear localization signal motif is present at residues 278-295; that stretch reads KGGGYKTMKKRKVKDEKG.

The protein belongs to the LAZY family. As to expression, expressed specifically in the cells at the inner side of the vascular bundles of young leaf sheaths and peripheral cylinders of vascular bundles in the unelongated stems. Expressed in the leaf sheath pulvinus and the lamina joint.

It is found in the cell membrane. It localises to the nucleus. Functionally, involved in the regulation of shoot gravitropism and tiller angle through negative regulation of basipetal polar auxin transport (PAT). Acts as positive regulator of lateral auxin transport. Promotes vertical shoot growth. LAZY1 and TAC1 play opposite functions in the regulation of tiller growth angle. In Oryza sativa subsp. japonica (Rice), this protein is Protein LAZY 1.